The sequence spans 302 residues: MRHLISMRDIGREEILNILNESEKMEAILNENGHCDFLNGRILATLFYEPSTRTRLSFETAMKRLGGNVIGFTDISNTSVTKGESLADTIKVISGYSDLIAIRHPSEGAARLSSENSKVPVINAGDGSNQHPTQTLLDLYTIKREVGHIENLKIAFIGDLKYGRTVHSLCQALSLFKSVEIKLIAPDELKMPREVIEDIDGKLKLSEMTDVEIDDVDVVYMTRIQKERFVDVNEYYKVKGIYRLSKEHIGNKNVVIMHPLPRVDEIDSEVDNIPQARYFKQSFYGVPVRMAILKLLFEDSIK.

Carbamoyl phosphate is bound by residues arginine 53 and threonine 54. Residue lysine 82 coordinates L-aspartate. Carbamoyl phosphate-binding residues include arginine 103, histidine 131, and glutamine 134. Residues arginine 164 and arginine 223 each coordinate L-aspartate. Residues leucine 260 and proline 261 each contribute to the carbamoyl phosphate site.

The protein belongs to the aspartate/ornithine carbamoyltransferase superfamily. ATCase family. Heterooligomer of catalytic and regulatory chains.

The enzyme catalyses carbamoyl phosphate + L-aspartate = N-carbamoyl-L-aspartate + phosphate + H(+). The protein operates within pyrimidine metabolism; UMP biosynthesis via de novo pathway; (S)-dihydroorotate from bicarbonate: step 2/3. Catalyzes the condensation of carbamoyl phosphate and aspartate to form carbamoyl aspartate and inorganic phosphate, the committed step in the de novo pyrimidine nucleotide biosynthesis pathway. The protein is Aspartate carbamoyltransferase catalytic subunit of Methanococcus maripaludis (strain C7 / ATCC BAA-1331).